The chain runs to 432 residues: 3-phosphoshikimate 1-carboxyvinyltransferase (432 aa).

3-phosphoshikimate contacts are provided by K22, S23, and R27. K22 contributes to the phosphoenolpyruvate binding site. Residues G96 and R127 each coordinate phosphoenolpyruvate. S173, S174, Q175, S201, D316, N339, and K343 together coordinate 3-phosphoshikimate. Residue Q175 participates in phosphoenolpyruvate binding. D316 serves as the catalytic Proton acceptor. Phosphoenolpyruvate-binding residues include R347, R391, and K416.

Belongs to the EPSP synthase family. Monomer.

Its subcellular location is the cytoplasm. The catalysed reaction is 3-phosphoshikimate + phosphoenolpyruvate = 5-O-(1-carboxyvinyl)-3-phosphoshikimate + phosphate. It functions in the pathway metabolic intermediate biosynthesis; chorismate biosynthesis; chorismate from D-erythrose 4-phosphate and phosphoenolpyruvate: step 6/7. In terms of biological role, catalyzes the transfer of the enolpyruvyl moiety of phosphoenolpyruvate (PEP) to the 5-hydroxyl of shikimate-3-phosphate (S3P) to produce enolpyruvyl shikimate-3-phosphate and inorganic phosphate. The polypeptide is 3-phosphoshikimate 1-carboxyvinyltransferase (Histophilus somni (Haemophilus somnus)).